The primary structure comprises 183 residues: ATP-dependent protease subunit HslV (183 aa).

The active site involves Thr13. 3 residues coordinate Na(+): Gly168, Cys171, and Thr174.

It belongs to the peptidase T1B family. HslV subfamily. A double ring-shaped homohexamer of HslV is capped on each side by a ring-shaped HslU homohexamer. The assembly of the HslU/HslV complex is dependent on binding of ATP.

It is found in the cytoplasm. It carries out the reaction ATP-dependent cleavage of peptide bonds with broad specificity.. Allosterically activated by HslU binding. Protease subunit of a proteasome-like degradation complex believed to be a general protein degrading machinery. The chain is ATP-dependent protease subunit HslV from Xanthomonas axonopodis pv. citri (strain 306).